Here is a 630-residue protein sequence, read N- to C-terminus: Angiotensin-converting enzyme-related protein (630 aa).

An N-terminal signal peptide occupies residues 1–22; sequence MGACNITVLLLVIMLWLPHGLS. The Peptidase M2 domain occupies 28 to 615; the sequence is SASVLEARRF…SRLGVPLGWG (588 aa). 2 cysteine pairs are disulfide-bonded: Cys142-Cys150 and Cys344-Cys362. His375 contacts Zn(2+). Glu376 acts as the Proton acceptor in catalysis. Residues His379 and Glu403 each coordinate Zn(2+). Residue His505 is the Proton donor of the active site. A disulfide bond links Cys530 and Cys548.

This sequence belongs to the peptidase M2 family. It depends on Zn(2+) as a cofactor. Post-translationally, glycosylated.

It is found in the secreted. Its subcellular location is the extracellular space. It catalyses the reaction Release of a C-terminal dipeptide, oligopeptide-|-Xaa-Yaa, when Xaa is not Pro, and Yaa is neither Asp nor Glu. Thus, conversion of angiotensin I to angiotensin II, with increase in vasoconstrictor activity, but no action on angiotensin II.. Inhibited by captopril, lisinopril, trandolaprilat, fosinoprilat and enalaprilat. May be involved in the specific maturation or degradation of a number of bioactive peptides. May have a role in the specification of heart progenitors. This Drosophila melanogaster (Fruit fly) protein is Angiotensin-converting enzyme-related protein (Acer).